A 2531-amino-acid polypeptide reads, in one-letter code: Probable polyketide synthase 26 (2531 aa).

Residues 10–433 form the Ketosynthase family 3 (KS3) domain; it reads QEDIAIIGFR…GSNCCLVLTE (424 aa). Residues C174, H316, and H356 each act as for beta-ketoacyl synthase activity in the active site. The acyl/malonyl transferase stretch occupies residues 620–653; it reads GINPSFIVGHSLGELPMAFCSGMIDFDTVCYLLY. The active-site For acyl/malonyl transferase activity is S630. The tract at residues 915–1036 is N-terminal hotdog fold; it reads MDTLGFSNEK…ANYHLSHRDD (122 aa). The region spanning 915-1206 is the PKS/mFAS DH domain; sequence MDTLGFSNEK…LKSLIPLKDP (292 aa). H948 (proton acceptor; for dehydratase activity) is an active-site residue. Residues 1055 to 1206 are C-terminal hotdog fold; that stretch reads NLTKLSKNQF…LKSLIPLKDP (152 aa). D1117 (proton donor; for dehydratase activity) is an active-site residue. The Carrier domain occupies 2431 to 2509; the sequence is ASENPVKDLL…DNIKILTDSY (79 aa). S2468 bears the O-(pantetheine 4'-phosphoryl)serine mark.

Pantetheine 4'-phosphate serves as cofactor.

In terms of biological role, probable polyketide synthase. This chain is Probable polyketide synthase 26 (pks26), found in Dictyostelium discoideum (Social amoeba).